We begin with the raw amino-acid sequence, 184 residues long: UPF0340 protein TTE0860 (184 aa).

Belongs to the UPF0340 family.

The polypeptide is UPF0340 protein TTE0860 (Caldanaerobacter subterraneus subsp. tengcongensis (strain DSM 15242 / JCM 11007 / NBRC 100824 / MB4) (Thermoanaerobacter tengcongensis)).